The following is a 720-amino-acid chain: Asp/Glu-specific dipeptidyl-peptidase (720 aa).

An N-terminal signal peptide occupies residues 1 to 21; the sequence is MKKRLLLPLFAALCLSQIAHA. An intrachain disulfide couples cysteine 69 to cysteine 86. Active-site charge relay system residues include histidine 85, aspartate 227, and serine 655.

The protein belongs to the peptidase S46 family. In terms of assembly, homodimer.

The protein resides in the cell surface. Enzyme activity is completely blocked by diisopropyl-fluorophosphates, moderately by phenylmethylsulfonyl fluoride (PMSF) and 4-(2-methyl)benzenesulfonyl fluoride, and slightly by pepstatin in vitro. Functionally, catalyzes the removal of dipeptides from the N-terminus of oligopeptides. Shows a strict specificity for acidic residues (Asp or Glu) in the P1 position, and has a hydrophobic residue preference at the P2 position. Preferentially cleaves the synthetic substrate Leu-Asp-methylcoumaryl-7-amide (Leu-Asp-MCA) as compared to Leu-Glu-MCA. Is involved in amino acid metabolism and bacterial growth of asaccharolytic P.gingivalis, that utilizes amino acids from extracellular proteinaceous nutrients as energy and carbon sources. In Porphyromonas gingivalis (strain ATCC 33277 / DSM 20709 / CIP 103683 / JCM 12257 / NCTC 11834 / 2561), this protein is Asp/Glu-specific dipeptidyl-peptidase.